A 172-amino-acid chain; its full sequence is Cell division protein SepF (172 aa).

The interval D16 to S78 is disordered. Over residues G17 to E48 the composition is skewed to basic and acidic residues.

This sequence belongs to the SepF family. As to quaternary structure, homodimer. Interacts with FtsZ.

The protein localises to the cytoplasm. Its function is as follows. Cell division protein that is part of the divisome complex and is recruited early to the Z-ring. Probably stimulates Z-ring formation, perhaps through the cross-linking of FtsZ protofilaments. Its function overlaps with FtsA. In Renibacterium salmoninarum (strain ATCC 33209 / DSM 20767 / JCM 11484 / NBRC 15589 / NCIMB 2235), this protein is Cell division protein SepF.